We begin with the raw amino-acid sequence, 253 residues long: 5'-nucleotidase SurE 2 (253 aa).

4 residues coordinate a divalent metal cation: Asp-8, Asp-9, Ser-39, and Asn-92.

It belongs to the SurE nucleotidase family. The cofactor is a divalent metal cation.

It localises to the cytoplasm. The catalysed reaction is a ribonucleoside 5'-phosphate + H2O = a ribonucleoside + phosphate. In terms of biological role, nucleotidase that shows phosphatase activity on nucleoside 5'-monophosphates. This chain is 5'-nucleotidase SurE 2, found in Burkholderia lata (strain ATCC 17760 / DSM 23089 / LMG 22485 / NCIMB 9086 / R18194 / 383).